The chain runs to 276 residues: 2-dehydro-3-deoxyphosphooctonate aldolase (276 aa).

It belongs to the KdsA family.

It is found in the cytoplasm. It catalyses the reaction D-arabinose 5-phosphate + phosphoenolpyruvate + H2O = 3-deoxy-alpha-D-manno-2-octulosonate-8-phosphate + phosphate. It functions in the pathway carbohydrate biosynthesis; 3-deoxy-D-manno-octulosonate biosynthesis; 3-deoxy-D-manno-octulosonate from D-ribulose 5-phosphate: step 2/3. Its pathway is bacterial outer membrane biogenesis; lipopolysaccharide biosynthesis. The sequence is that of 2-dehydro-3-deoxyphosphooctonate aldolase from Stenotrophomonas maltophilia (strain R551-3).